The primary structure comprises 285 residues: Vacuolar protein sorting-associated protein 37B (285 aa).

An interaction with IST1 region spans residues 50 to 170; that stretch reads ASNRSLAEGN…EMVLKGQRLP (121 aa). The 90-residue stretch at 84 to 173 folds into the VPS37 C-terminal domain; the sequence is FEAYQIKKTK…LKGQRLPQAL (90 aa). A disordered region spans residues 175–201; that stretch reads PLPPRLPELAPTAPLPYPAPEASGPPA. R218 carries the omega-N-methylarginine modification. Positions 230 to 285 are disordered; it reads GQAVPYPGLQCPPLPPRVGLPTQQGFSSQFVSPYPPPLPQRPPPRLPPHQPGFILQ. A compositionally biased stretch (polar residues) spans 250–260; sequence PTQQGFSSQFV. The span at 262-279 shows a compositional bias: pro residues; that stretch reads PYPPPLPQRPPPRLPPHQ.

Belongs to the VPS37 family. Component of the ESCRT-I complex (endosomal sorting complex required for transport I) which consists of TSG101, VPS28, a VPS37 protein (VPS37A to -D) and MVB12A or MVB12B in a 1:1:1:1 stoichiometry. Interacts with TSG101, VPS28, MVB12A and MVB12B. Component of the ESCRT-I complex (endosomal sorting complex required for transport I) which consists of TSG101, VPS28, a VPS37 protein (VPS37A to -D) and UBAP1 in a 1:1:1:1 stoichiometry. Interacts with CEP55. Interacts with IST1. Widely expressed. Expressed in macrophages and lymphocytes.

Its subcellular location is the late endosome membrane. Component of the ESCRT-I complex, a regulator of vesicular trafficking process. Required for the sorting of endocytic ubiquitinated cargos into multivesicular bodies. May be involved in cell growth and differentiation. In Homo sapiens (Human), this protein is Vacuolar protein sorting-associated protein 37B (VPS37B).